Consider the following 83-residue polypeptide: Small ribosomal subunit protein eS27 (83 aa).

The segment at 37–59 (CSGCFKISTVFSHATTVVVCVGC) adopts a C4-type zinc-finger fold.

The protein belongs to the eukaryotic ribosomal protein eS27 family. Requires Zn(2+) as cofactor.

This chain is Small ribosomal subunit protein eS27 (rps-27), found in Caenorhabditis elegans.